Consider the following 191-residue polypeptide: Hypoxanthine/guanine phosphoribosyltransferase (191 aa).

The protein belongs to the purine/pyrimidine phosphoribosyltransferase family. Archaeal HPRT subfamily. As to quaternary structure, homodimer.

The protein resides in the cytoplasm. It catalyses the reaction IMP + diphosphate = hypoxanthine + 5-phospho-alpha-D-ribose 1-diphosphate. The enzyme catalyses GMP + diphosphate = guanine + 5-phospho-alpha-D-ribose 1-diphosphate. It participates in purine metabolism; IMP biosynthesis via salvage pathway; IMP from hypoxanthine: step 1/1. Catalyzes a salvage reaction resulting in the formation of IMP that is energically less costly than de novo synthesis. In Methanocella paludicola (strain DSM 17711 / JCM 13418 / NBRC 101707 / SANAE), this protein is Hypoxanthine/guanine phosphoribosyltransferase.